The primary structure comprises 606 residues: MPYEIKKVFASLPQVERGVSKIVGGDPKGNSFLYTNGKCVILRNIDNPAIADIYTEHAHQVVVAKYAPSGFYIASGDVSGKLRIWDTTQKEHLLKYEYQPFAGKIKDIAWTEDSKRIAVVGEGREKFGAVFLWDSGSSVGEITGHNKVINSVDIKQSRPYRLVTGSDDNCAAFFEGPPFKFKFTISDHGRFVNCVRFSPDGNRFATASADGQIFIYDGKTGEKVCALGGSKAHDGGIYAISWSPDSTHLLSASGDKTSKIWDVNVNSVVNTFTMGSNVLDQQLGCLWQKDHLLSISLSGYINYLDKNNPSKPLRVIKGHSKSIQCLTVHKNGGKSYIYSGSHDGHINYWDSETGENDSFAGKGHTNQVSRMTVDEHGQLVSCSMDDTVRYTNLTLRDYSGQGVVKLDVQPKCLAVGPGGYTVVVCIGQIVLLKDQRKCFSIDNPGYEPEVVAVHPGGETVAVGGADGNVRLYSILGTTLKDEGKLLEAKGPVTDLAFSHDGAFLAVCDASKVVTVFSVADGYSENNVFYGHHAKIVCLAWSPDNEHFASGGMDMMVYVWTLSDPETRVKIQDAHRLHHVSSLAWLDEHTLVTTSHDASVKEWTIAY.

13 WD repeats span residues Glu4–Ile45, Pro48–Thr87, Leu93–Ser135, Ser138–Gly176, Lys180–Gly218, Val224–Val263, Asn270–Lys306, Lys311–Ser351, Ser358–Val408, Leu432–Ile474, Lys480–Val518, Ser523–Leu561, and Thr566–Ile604. Residues Lys28, Lys81, Lys95, and Lys115 each carry the N6-acetyllysine modification. The residue at position 238 (Tyr238) is a Phosphotyrosine. An N6-acetyllysine modification is found at Lys480.

This sequence belongs to the WD repeat AIP1 family.

The protein resides in the cytoplasm. The protein localises to the cytoskeleton. Its subcellular location is the cell projection. It is found in the podosome. In terms of biological role, induces disassembly of actin filaments in conjunction with ADF/cofilin family proteins. Enhances cofilin-mediated actin severing. Involved in cytokinesis. Involved in chemotactic cell migration by restricting lamellipodial membrane protrusions. Involved in myocardium sarcomere organization. Required for cardiomyocyte growth and maintenance. Involved in megakaryocyte maturation and platelet shedding. Required for the establishment of planar cell polarity (PCP) during follicular epithelium development and for cell shape changes during PCP; the function seems to implicate cooperation with CFL1 and/or DSTN/ADF. Involved in the generation/maintenance of cortical tension. Involved in assembly and maintenance of epithelial apical cell junctions and plays a role in the organization of the perijunctional actomyosin belt. The sequence is that of WD repeat-containing protein 1 (WDR1) from Bos taurus (Bovine).